Reading from the N-terminus, the 688-residue chain is Translation initiation factor IF-2 (688 aa).

Basic and acidic residues-rich tracts occupy residues 53–62 (GKEKSEKTKE) and 86–95 (KRDDKNEKVN). Positions 53–100 (GKEKSEKTKEEDDEIETTAKNPIKESMNNKKSNKRDDKNEKVNTENAE) are disordered. In terms of domain architecture, tr-type G spans 187–354 (KRSPIITVMG…MILLSSEILE (168 aa)). A G1 region spans residues 196 to 203 (GHVDHGKT). GTP is bound at residue 196-203 (GHVDHGKT). Residues 221-225 (GITQH) are G2. Residues 242–245 (DTPG) are G3. GTP-binding positions include 242–246 (DTPGH) and 296–299 (NKID). Positions 296-299 (NKID) are G4. Positions 332 to 334 (SAH) are G5.

The protein belongs to the TRAFAC class translation factor GTPase superfamily. Classic translation factor GTPase family. IF-2 subfamily.

It localises to the cytoplasm. In terms of biological role, one of the essential components for the initiation of protein synthesis. Protects formylmethionyl-tRNA from spontaneous hydrolysis and promotes its binding to the 30S ribosomal subunits. Also involved in the hydrolysis of GTP during the formation of the 70S ribosomal complex. This chain is Translation initiation factor IF-2, found in Clostridium botulinum (strain Loch Maree / Type A3).